The primary structure comprises 208 residues: Outer-membrane lipoprotein LolB (208 aa).

An N-terminal signal peptide occupies residues 1 to 17 (MIRRLLGVALLTGAITG). The N-palmitoyl cysteine moiety is linked to residue C18. C18 carries the S-diacylglycerol cysteine lipid modification.

The protein belongs to the LolB family. Monomer.

The protein localises to the cell outer membrane. Plays a critical role in the incorporation of lipoproteins in the outer membrane after they are released by the LolA protein. This is Outer-membrane lipoprotein LolB from Marinobacter nauticus (strain ATCC 700491 / DSM 11845 / VT8) (Marinobacter aquaeolei).